A 59-amino-acid chain; its full sequence is Single-pass membrane and coiled-coil domain-containing protein 4 (59 aa).

A disordered region spans residues 1–23; the sequence is MRQLKGKPKKETSKDKKERKQAM. Basic and acidic residues predominate over residues 9 to 22; that stretch reads KKETSKDKKERKQA. Positions 9 to 31 form a coiled coil; that stretch reads KKETSKDKKERKQAMQEARQQIT. Residues 32–52 form a helical membrane-spanning segment; it reads TVVLPTLAVVVLLIVVFVYVA.

The protein belongs to the SMCO4 family.

Its subcellular location is the membrane. This Homo sapiens (Human) protein is Single-pass membrane and coiled-coil domain-containing protein 4 (SMCO4).